A 471-amino-acid chain; its full sequence is Phosphoglycerate kinase (471 aa).

Substrate-binding positions include 24–26 (DFN), arginine 41, 64–67 (HLSR), arginine 127, and arginine 169. Residues lysine 220, glycine 307, glutamate 338, and 368-371 (GGDS) each bind ATP. Residues 417 to 471 (KVEAVKEKTTTTTESASKEKSSTAKTASKPATSKTTAAKKPAEKKPAAKKPAAKK) are disordered. Positions 439–455 (TAKTASKPATSKTTAAK) are enriched in low complexity.

It belongs to the phosphoglycerate kinase family. Monomer.

The protein localises to the cytoplasm. It catalyses the reaction (2R)-3-phosphoglycerate + ATP = (2R)-3-phospho-glyceroyl phosphate + ADP. The protein operates within carbohydrate degradation; glycolysis; pyruvate from D-glyceraldehyde 3-phosphate: step 2/5. This is Phosphoglycerate kinase from Malacoplasma penetrans (strain HF-2) (Mycoplasma penetrans).